Reading from the N-terminus, the 474-residue chain is Glycogen synthase (474 aa).

Lys12 contacts ADP-alpha-D-glucose.

Belongs to the glycosyltransferase 1 family. Bacterial/plant glycogen synthase subfamily.

It catalyses the reaction [(1-&gt;4)-alpha-D-glucosyl](n) + ADP-alpha-D-glucose = [(1-&gt;4)-alpha-D-glucosyl](n+1) + ADP + H(+). Its pathway is glycan biosynthesis; glycogen biosynthesis. Synthesizes alpha-1,4-glucan chains using ADP-glucose. The protein is Glycogen synthase of Xanthomonas axonopodis pv. citri (strain 306).